The following is a 1798-amino-acid chain: DNA polymerase II large subunit (1798 aa).

A disordered region spans residues 286–309 (EKGKSSEENKDESKAEDTGTESVA). A DOD-type homing endonuclease domain is found at 1184 to 1319 (VVGYYLAEGY…ETLLLAKFGI (136 aa)). Positions 1699-1798 (TGHSNGKNGY…GISLDEFFGS (100 aa)) are disordered. Positions 1714–1731 (GKNGKASKKSGSLASKLS) are enriched in low complexity. Residues 1733-1753 (KGKEPSKKKESAKPKRSEKVK) are compositionally biased toward basic and acidic residues.

The protein belongs to the archaeal DNA polymerase II family. As to quaternary structure, heterodimer of a large subunit and a small subunit. In terms of processing, this protein undergoes a protein self splicing that involves a post-translational excision of the intervening region (intein) followed by peptide ligation.

The catalysed reaction is DNA(n) + a 2'-deoxyribonucleoside 5'-triphosphate = DNA(n+1) + diphosphate. It catalyses the reaction Exonucleolytic cleavage in the 3'- to 5'-direction to yield nucleoside 5'-phosphates.. Its function is as follows. Possesses two activities: a DNA synthesis (polymerase) and an exonucleolytic activity that degrades single-stranded DNA in the 3'- to 5'-direction. Has a template-primer preference which is characteristic of a replicative DNA polymerase. The polypeptide is DNA polymerase II large subunit (polC) (Thermococcus kodakarensis (strain ATCC BAA-918 / JCM 12380 / KOD1) (Pyrococcus kodakaraensis (strain KOD1))).